The primary structure comprises 124 residues: Large ribosomal subunit protein bL19 (124 aa).

This sequence belongs to the bacterial ribosomal protein bL19 family.

Functionally, this protein is located at the 30S-50S ribosomal subunit interface and may play a role in the structure and function of the aminoacyl-tRNA binding site. This chain is Large ribosomal subunit protein bL19, found in Orientia tsutsugamushi (strain Ikeda) (Rickettsia tsutsugamushi).